Consider the following 223-residue polypeptide: Class E basic helix-loop-helix protein 23 (223 aa).

The segment at 32–93 is disordered; that stretch reads PETTRGFGAS…GVAVDARRRP (62 aa). The 55-residue stretch at 98–152 folds into the bHLH domain; the sequence is SLRLSINARERRRMHDLNDALDGLRAVIPYAHSPSVRKLSKIATLLLAKNYILMQ.

As to expression, expressed in brain and retina.

It localises to the nucleus. In terms of biological role, may function as transcriptional repressor. May modulate the expression of genes required for the differentiation and/or maintenance of pancreatic and neuronal cell types. May be important for rod bipolar cell maturation. In Mus musculus (Mouse), this protein is Class E basic helix-loop-helix protein 23 (Bhlhe23).